Consider the following 242-residue polypeptide: ATP synthase subunit a (242 aa).

5 helical membrane-spanning segments follow: residues 28-48, 89-109, 128-148, 193-213, and 214-234; these read LHGQ…LLVV, LPFV…GALI, INTT…AGLS, LVVA…AMFL, and GLFT…NYIG.

The protein belongs to the ATPase A chain family. F-type ATPases have 2 components, CF(1) - the catalytic core - and CF(0) - the membrane proton channel. CF(1) has five subunits: alpha(3), beta(3), gamma(1), delta(1), epsilon(1). CF(0) has four main subunits: a, b, b' and c.

It is found in the cellular thylakoid membrane. In terms of biological role, key component of the proton channel; it plays a direct role in the translocation of protons across the membrane. The protein is ATP synthase subunit a of Synechococcus sp. (strain WH7803).